We begin with the raw amino-acid sequence, 459 residues long: Argininosuccinate lyase (459 aa).

It belongs to the lyase 1 family. Argininosuccinate lyase subfamily.

The protein resides in the cytoplasm. It catalyses the reaction 2-(N(omega)-L-arginino)succinate = fumarate + L-arginine. The protein operates within amino-acid biosynthesis; L-arginine biosynthesis; L-arginine from L-ornithine and carbamoyl phosphate: step 3/3. The polypeptide is Argininosuccinate lyase (Prochlorococcus marinus (strain AS9601)).